The chain runs to 726 residues: 1,4-alpha-glucan branching enzyme GlgB (726 aa).

Asp-407 acts as the Nucleophile in catalysis. The Proton donor role is filled by Glu-460.

Belongs to the glycosyl hydrolase 13 family. GlgB subfamily. Monomer.

The enzyme catalyses Transfers a segment of a (1-&gt;4)-alpha-D-glucan chain to a primary hydroxy group in a similar glucan chain.. It functions in the pathway glycan biosynthesis; glycogen biosynthesis. Its function is as follows. Catalyzes the formation of the alpha-1,6-glucosidic linkages in glycogen by scission of a 1,4-alpha-linked oligosaccharide from growing alpha-1,4-glucan chains and the subsequent attachment of the oligosaccharide to the alpha-1,6 position. In Hydrogenovibrio crunogenus (strain DSM 25203 / XCL-2) (Thiomicrospira crunogena), this protein is 1,4-alpha-glucan branching enzyme GlgB.